The following is a 368-amino-acid chain: Dual-specificity RNA methyltransferase RlmN (368 aa).

Glu-94 (proton acceptor) is an active-site residue. Residues 100–334 (EEDRATLCVS…VIVRKTRGDD (235 aa)) form the Radical SAM core domain. Cysteines 107 and 339 form a disulfide. Residues Cys-114, Cys-118, and Cys-121 each coordinate [4Fe-4S] cluster. S-adenosyl-L-methionine contacts are provided by residues 163–164 (GE), Ser-195, 217–219 (SLH), and Asn-296. Cys-339 functions as the S-methylcysteine intermediate in the catalytic mechanism.

It belongs to the radical SAM superfamily. RlmN family. [4Fe-4S] cluster is required as a cofactor.

Its subcellular location is the cytoplasm. The enzyme catalyses adenosine(2503) in 23S rRNA + 2 reduced [2Fe-2S]-[ferredoxin] + 2 S-adenosyl-L-methionine = 2-methyladenosine(2503) in 23S rRNA + 5'-deoxyadenosine + L-methionine + 2 oxidized [2Fe-2S]-[ferredoxin] + S-adenosyl-L-homocysteine. The catalysed reaction is adenosine(37) in tRNA + 2 reduced [2Fe-2S]-[ferredoxin] + 2 S-adenosyl-L-methionine = 2-methyladenosine(37) in tRNA + 5'-deoxyadenosine + L-methionine + 2 oxidized [2Fe-2S]-[ferredoxin] + S-adenosyl-L-homocysteine. Specifically methylates position 2 of adenine 2503 in 23S rRNA and position 2 of adenine 37 in tRNAs. m2A2503 modification seems to play a crucial role in the proofreading step occurring at the peptidyl transferase center and thus would serve to optimize ribosomal fidelity. The protein is Dual-specificity RNA methyltransferase RlmN of Aeromonas salmonicida (strain A449).